A 459-amino-acid chain; its full sequence is Lipase 4 (459 aa).

An N-terminal signal peptide occupies residues 1–14 (MLFLLFLLVAPIYA). Residues C110 and C281 are joined by a disulfide bond. The Charge relay system role is filled by S194. 2 N-linked (GlcNAc...) asparagine glycosylation sites follow: N229 and N266. Residues D343 and H376 each act as charge relay system in the active site. Cysteines 359 and 404 form a disulfide.

The protein belongs to the AB hydrolase superfamily. Lipase family. Class Lip subfamily.

Its subcellular location is the secreted. The enzyme catalyses a triacylglycerol + H2O = a diacylglycerol + a fatty acid + H(+). Secreted lipase that is able to hydrolyze both the neutral triacylglycerols and the monopalmitate ester Tween 40, allowing the use of hydrolyzed products as carbon sources. Has broad lipolytic activity, which may be important for colonization and subsequent infection, therefore contributing to the persistence and virulence in human tissue. The polypeptide is Lipase 4 (Candida albicans (strain SC5314 / ATCC MYA-2876) (Yeast)).